A 309-amino-acid chain; its full sequence is 4-hydroxy-3-methylbut-2-enyl diphosphate reductase (309 aa).

Position 13 (Cys-13) interacts with [4Fe-4S] cluster. His-42 and His-75 together coordinate (2E)-4-hydroxy-3-methylbut-2-enyl diphosphate. 2 residues coordinate dimethylallyl diphosphate: His-42 and His-75. Residues His-42 and His-75 each contribute to the isopentenyl diphosphate site. Cys-97 contacts [4Fe-4S] cluster. His-125 provides a ligand contact to (2E)-4-hydroxy-3-methylbut-2-enyl diphosphate. His-125 provides a ligand contact to dimethylallyl diphosphate. Position 125 (His-125) interacts with isopentenyl diphosphate. The active-site Proton donor is Glu-127. Thr-165 provides a ligand contact to (2E)-4-hydroxy-3-methylbut-2-enyl diphosphate. Cys-195 serves as a coordination point for [4Fe-4S] cluster. (2E)-4-hydroxy-3-methylbut-2-enyl diphosphate contacts are provided by Ser-223, Ser-224, Asn-225, and Ser-267. Dimethylallyl diphosphate is bound by residues Ser-223, Ser-224, Asn-225, and Ser-267. Isopentenyl diphosphate-binding residues include Ser-223, Ser-224, Asn-225, and Ser-267.

Belongs to the IspH family. [4Fe-4S] cluster serves as cofactor.

It catalyses the reaction isopentenyl diphosphate + 2 oxidized [2Fe-2S]-[ferredoxin] + H2O = (2E)-4-hydroxy-3-methylbut-2-enyl diphosphate + 2 reduced [2Fe-2S]-[ferredoxin] + 2 H(+). It carries out the reaction dimethylallyl diphosphate + 2 oxidized [2Fe-2S]-[ferredoxin] + H2O = (2E)-4-hydroxy-3-methylbut-2-enyl diphosphate + 2 reduced [2Fe-2S]-[ferredoxin] + 2 H(+). Its pathway is isoprenoid biosynthesis; dimethylallyl diphosphate biosynthesis; dimethylallyl diphosphate from (2E)-4-hydroxy-3-methylbutenyl diphosphate: step 1/1. It participates in isoprenoid biosynthesis; isopentenyl diphosphate biosynthesis via DXP pathway; isopentenyl diphosphate from 1-deoxy-D-xylulose 5-phosphate: step 6/6. Catalyzes the conversion of 1-hydroxy-2-methyl-2-(E)-butenyl 4-diphosphate (HMBPP) into a mixture of isopentenyl diphosphate (IPP) and dimethylallyl diphosphate (DMAPP). Acts in the terminal step of the DOXP/MEP pathway for isoprenoid precursor biosynthesis. The protein is 4-hydroxy-3-methylbut-2-enyl diphosphate reductase of Chlamydia felis (strain Fe/C-56) (Chlamydophila felis).